The sequence spans 328 residues: Aspartate carbamoyltransferase catalytic subunit (328 aa).

Carbamoyl phosphate-binding residues include arginine 64 and threonine 65. Lysine 92 contacts L-aspartate. 3 residues coordinate carbamoyl phosphate: arginine 114, histidine 144, and glutamine 147. Arginine 177 and arginine 232 together coordinate L-aspartate. Carbamoyl phosphate-binding residues include glycine 273 and proline 274.

This sequence belongs to the aspartate/ornithine carbamoyltransferase superfamily. ATCase family. As to quaternary structure, heterododecamer (2C3:3R2) of six catalytic PyrB chains organized as two trimers (C3), and six regulatory PyrI chains organized as three dimers (R2).

The enzyme catalyses carbamoyl phosphate + L-aspartate = N-carbamoyl-L-aspartate + phosphate + H(+). It participates in pyrimidine metabolism; UMP biosynthesis via de novo pathway; (S)-dihydroorotate from bicarbonate: step 2/3. Functionally, catalyzes the condensation of carbamoyl phosphate and aspartate to form carbamoyl aspartate and inorganic phosphate, the committed step in the de novo pyrimidine nucleotide biosynthesis pathway. In Halorhodospira halophila (strain DSM 244 / SL1) (Ectothiorhodospira halophila (strain DSM 244 / SL1)), this protein is Aspartate carbamoyltransferase catalytic subunit.